Reading from the N-terminus, the 23-residue chain is Glutamine synthetase (23 aa).

Belongs to the glutamine synthetase family. In terms of assembly, oligomer of 12 subunits arranged in the form of two hexagons. Mg(2+) is required as a cofactor.

The protein localises to the cytoplasm. The catalysed reaction is L-glutamate + NH4(+) + ATP = L-glutamine + ADP + phosphate + H(+). The activity of this enzyme could be controlled by adenylation under conditions of abundant glutamine. Functionally, involved in nitrogen metabolism via ammonium assimilation. Catalyzes the ATP-dependent biosynthesis of glutamine from glutamate and ammonia. The protein is Glutamine synthetase of Phormidium lapideum.